A 291-amino-acid chain; its full sequence is Glutamate racemase (291 aa).

Residues 12–13 (DS) and 44–45 (YG) contribute to the substrate site. The active-site Proton donor/acceptor is the C75. Substrate is bound at residue 76–77 (NT). Catalysis depends on C187, which acts as the Proton donor/acceptor. 188 to 189 (TH) is a binding site for substrate. Residues 234 to 247 (ATQAAGARAQMAPS) are compositionally biased toward low complexity. The interval 234–257 (ATQAAGARAQMAPSAPEPKEGTPD) is disordered.

Belongs to the aspartate/glutamate racemases family.

It carries out the reaction L-glutamate = D-glutamate. The protein operates within cell wall biogenesis; peptidoglycan biosynthesis. Its function is as follows. Provides the (R)-glutamate required for cell wall biosynthesis. The sequence is that of Glutamate racemase from Koribacter versatilis (strain Ellin345).